Consider the following 59-residue polypeptide: Antibacterial peptide enbocin (59 aa).

The N-terminal stretch at 1-20 (MNFTRIIFFLFVVVFATASG) is a signal peptide. Residue Lys-21 is a propeptide. Serine amide is present on Ser-58.

Belongs to the cecropin family.

The protein resides in the secreted. Has antibacterial activity against Gram-positive and Gram-negative bacteria. This is Antibacterial peptide enbocin from Bombyx mori (Silk moth).